Here is a 762-residue protein sequence, read N- to C-terminus: Cell surface protein (762 aa).

Positions 1–26 are cleaved as a signal peptide; that stretch reads MKNLKKLIAVVSTFALVFSAMAVGFA. 3 SLH domains span residues 27–90, 92–155, and 156–204; these read ATTP…EMAK, EKSA…WPYG, and YLAK…KEVL. 4 O-linked (Glc...) tyrosine glycosylation sites follow: Tyr-297, Tyr-516, Tyr-520, and Tyr-632.

In terms of processing, glycosylated; contains 8% carbohydrates, which correspond to about 40 to 50 sugar molecules per monomer. O-linked glycans consist of Glc, GalNAc and GlcNAc.

The protein resides in the secreted. Its subcellular location is the cell wall. It localises to the S-layer. Its function is as follows. The S-layer is a paracrystalline mono-layered assembly of proteins which coat the surface of bacteria. The sequence is that of Cell surface protein from Thermoanaerobacter kivui (Acetogenium kivui).